The primary structure comprises 651 residues: Probable Xaa-Pro aminopeptidase P (651 aa).

4 residues coordinate Mn(2+): aspartate 448, aspartate 459, glutamate 557, and glutamate 571.

It belongs to the peptidase M24B family. Mn(2+) serves as cofactor.

The enzyme catalyses Release of any N-terminal amino acid, including proline, that is linked to proline, even from a dipeptide or tripeptide.. In terms of biological role, catalyzes the removal of a penultimate prolyl residue from the N-termini of peptides. The protein is Probable Xaa-Pro aminopeptidase P (AMPP) of Coccidioides posadasii (strain C735) (Valley fever fungus).